The chain runs to 327 residues: Glycerol-3-phosphate dehydrogenase [NAD(P)+] (327 aa).

NADPH-binding residues include Phe14, Arg35, and Lys108. Sn-glycerol 3-phosphate contacts are provided by Lys108 and Gly136. NADPH is bound at residue Ala140. 5 residues coordinate sn-glycerol 3-phosphate: Lys191, Asp244, Ser254, Arg255, and Asn256. The Proton acceptor role is filled by Lys191. Arg255 provides a ligand contact to NADPH. Residues Leu275 and Glu277 each contribute to the NADPH site.

This sequence belongs to the NAD-dependent glycerol-3-phosphate dehydrogenase family.

The protein localises to the cytoplasm. It catalyses the reaction sn-glycerol 3-phosphate + NAD(+) = dihydroxyacetone phosphate + NADH + H(+). The enzyme catalyses sn-glycerol 3-phosphate + NADP(+) = dihydroxyacetone phosphate + NADPH + H(+). It functions in the pathway membrane lipid metabolism; glycerophospholipid metabolism. In terms of biological role, catalyzes the reduction of the glycolytic intermediate dihydroxyacetone phosphate (DHAP) to sn-glycerol 3-phosphate (G3P), the key precursor for phospholipid synthesis. The protein is Glycerol-3-phosphate dehydrogenase [NAD(P)+] of Agrobacterium fabrum (strain C58 / ATCC 33970) (Agrobacterium tumefaciens (strain C58)).